The chain runs to 364 residues: Uroporphyrinogen decarboxylase (364 aa).

Substrate is bound by residues 28–32, aspartate 78, tyrosine 160, threonine 215, and histidine 333; that span reads RQAGR.

Belongs to the uroporphyrinogen decarboxylase family. Homodimer.

It localises to the cytoplasm. The catalysed reaction is uroporphyrinogen III + 4 H(+) = coproporphyrinogen III + 4 CO2. It participates in porphyrin-containing compound metabolism; protoporphyrin-IX biosynthesis; coproporphyrinogen-III from 5-aminolevulinate: step 4/4. Functionally, catalyzes the decarboxylation of four acetate groups of uroporphyrinogen-III to yield coproporphyrinogen-III. This chain is Uroporphyrinogen decarboxylase, found in Burkholderia pseudomallei (strain 1106a).